Consider the following 421-residue polypeptide: Imidazolonepropionase (421 aa).

Fe(3+) is bound by residues histidine 81 and histidine 83. Residues histidine 81 and histidine 83 each coordinate Zn(2+). Residues arginine 90, tyrosine 153, and histidine 186 each coordinate 4-imidazolone-5-propanoate. N-formimidoyl-L-glutamate is bound at residue tyrosine 153. Histidine 251 is a binding site for Fe(3+). Histidine 251 contributes to the Zn(2+) binding site. Glutamate 254 serves as a coordination point for 4-imidazolone-5-propanoate. Aspartate 326 lines the Fe(3+) pocket. Residue aspartate 326 participates in Zn(2+) binding. 2 residues coordinate N-formimidoyl-L-glutamate: asparagine 328 and glycine 330. Position 331 (serine 331) interacts with 4-imidazolone-5-propanoate.

Belongs to the metallo-dependent hydrolases superfamily. HutI family. Zn(2+) is required as a cofactor. It depends on Fe(3+) as a cofactor.

Its subcellular location is the cytoplasm. It catalyses the reaction 4-imidazolone-5-propanoate + H2O = N-formimidoyl-L-glutamate. It functions in the pathway amino-acid degradation; L-histidine degradation into L-glutamate; N-formimidoyl-L-glutamate from L-histidine: step 3/3. In terms of biological role, catalyzes the hydrolytic cleavage of the carbon-nitrogen bond in imidazolone-5-propanoate to yield N-formimidoyl-L-glutamate. It is the third step in the universal histidine degradation pathway. The sequence is that of Imidazolonepropionase from Streptococcus pyogenes serotype M4 (strain MGAS10750).